The following is a 369-amino-acid chain: MTQKTILNDTHRALGAKMVDFGGWDMPIHYGSQLDEHHQVRRDAGMFDVSHMTVVDLHGARVREFLRYLLANSVDKLKVSGKALYTCMLNPQGGVIDDLIVYYMTEDFFRLVVNAATREKDLQWIGEQAARFDVRVEERSDFAMIAVQGPSARTKVIDLLDPADTAAASKLGRFAALQTRSRDGIELFLARTGYTGEDGFEIVLPQQAAVAFWNALLAQGVKPAGLGARDTLRLEAGMNLYGQDMDDGVTPYEAGLAWTIALDEGRDFIGRSVLESQKAQGAPRQLIGVVMDEKGVLRHGQTVLTANGEGEILSGTFSPTLGKAIAFARVPAGSIEQLRVDIRGKQVPLRAVKFPFVRDGQAQPGVLGD.

The protein belongs to the GcvT family. In terms of assembly, the glycine cleavage system is composed of four proteins: P, T, L and H.

The catalysed reaction is N(6)-[(R)-S(8)-aminomethyldihydrolipoyl]-L-lysyl-[protein] + (6S)-5,6,7,8-tetrahydrofolate = N(6)-[(R)-dihydrolipoyl]-L-lysyl-[protein] + (6R)-5,10-methylene-5,6,7,8-tetrahydrofolate + NH4(+). In terms of biological role, the glycine cleavage system catalyzes the degradation of glycine. The chain is Aminomethyltransferase from Xanthomonas axonopodis pv. citri (strain 306).